The chain runs to 421 residues: Alpha-1-antitrypsin-related protein (421 aa).

A signal peptide spans 1 to 21 (MPFSVSWGILLLAGLCCLVPS). 4 N-linked (GlcNAc...) asparagine glycosylation sites follow: N56, N110, N148, and N274.

It belongs to the serpin family. Interacts with CANX and PDIA3. In terms of processing, glycosylated. In terms of tissue distribution, expressed in the liver, leukocytes and testis. Also detected in brain, colon, uterus, esophagus, spleen, trachea, kidney and lung.

Its subcellular location is the endoplasmic reticulum. Functionally, putative serine protease inhibitor. This chain is Alpha-1-antitrypsin-related protein (SERPINA2), found in Homo sapiens (Human).